Reading from the N-terminus, the 121-residue chain is Ribonuclease P protein component (121 aa).

It belongs to the RnpA family. In terms of assembly, consists of a catalytic RNA component (M1 or rnpB) and a protein subunit.

The enzyme catalyses Endonucleolytic cleavage of RNA, removing 5'-extranucleotides from tRNA precursor.. Its function is as follows. RNaseP catalyzes the removal of the 5'-leader sequence from pre-tRNA to produce the mature 5'-terminus. It can also cleave other RNA substrates such as 4.5S RNA. The protein component plays an auxiliary but essential role in vivo by binding to the 5'-leader sequence and broadening the substrate specificity of the ribozyme. This Oceanobacillus iheyensis (strain DSM 14371 / CIP 107618 / JCM 11309 / KCTC 3954 / HTE831) protein is Ribonuclease P protein component.